The sequence spans 1889 residues: Treslin (1889 aa).

9 positions are modified to phosphoserine: serine 295, serine 599, serine 820, serine 861, serine 919, serine 934, serine 1002, serine 1027, and serine 1078. Over residues 812-832 (DSMSQESMSPPPSSSTHRSVS) the composition is skewed to low complexity. The interval 812-836 (DSMSQESMSPPPSSSTHRSVSAITE) is disordered. Residues 979-1063 (RLLHRQIKGR…RENFPVQSIQ (85 aa)) form a disordered region. Positions 1020 to 1050 (LSFSRTNSGSFYSVSQPKSRSVQRIHSSQQE) are enriched in polar residues. 6 disordered regions span residues 1098–1421 (EIST…SQFS), 1471–1508 (LPGE…SSSE), 1520–1543 (GKQR…SPQT), 1630–1714 (SCTP…SLEQ), 1730–1751 (VCQL…ETSW), and 1841–1875 (QGRT…TLSR). Polar residues predominate over residues 1127–1179 (TAQTLLYTPERLQNSPTEMTSAEGTISEATIKTPSSHGYNSPFASKVTSQKTV). Threonine 1134 is subject to Phosphothreonine. Serine 1141 bears the Phosphoserine mark. Residues 1187 to 1197 (SPPLTKLPSTP) are compositionally biased toward low complexity. Residues 1203–1219 (QPPQCSSDCTWPHSVNS) show a composition bias toward polar residues. Positions 1339 to 1351 (TSPSVTSSVSCPV) are enriched in low complexity. Residues 1373-1382 (KLRRSCRKKS) show a composition bias toward basic residues. A Phosphoserine modification is found at serine 1406. Positions 1496–1508 (LVPAPSSVSSSSE) are enriched in low complexity. Polar residues-rich tracts occupy residues 1525–1543 (DAAQ…SPQT) and 1652–1662 (WTPSPKQSGKT). A compositionally biased stretch (basic and acidic residues) spans 1705-1714 (PEGKERSLEQ).

This sequence belongs to the treslin family. As to quaternary structure, interacts with TOPBP1 (via BRCT domains); interaction takes place in a CDK2-dependent manner. Component of the replisome complex composed of at least DONSON, MCM2, MCM7, PCNA and TICRR.

The protein resides in the nucleus. Its function is as follows. Regulator of DNA replication and S/M and G2/M checkpoints. Regulates the triggering of DNA replication initiation via its interaction with TOPBP1 by participating in CDK2-mediated loading of CDC45L onto replication origins. Required for the transition from pre-replication complex (pre-RC) to pre-initiation complex (pre-IC). Required to prevent mitotic entry after treatment with ionizing radiation. This chain is Treslin (Ticrr), found in Mus musculus (Mouse).